A 311-amino-acid polypeptide reads, in one-letter code: Ribosomal RNA small subunit methyltransferase H (311 aa).

S-adenosyl-L-methionine is bound by residues 33–35 (AGH), Asp53, Phe80, Asp101, and Gln108.

It belongs to the methyltransferase superfamily. RsmH family.

The protein resides in the cytoplasm. It catalyses the reaction cytidine(1402) in 16S rRNA + S-adenosyl-L-methionine = N(4)-methylcytidine(1402) in 16S rRNA + S-adenosyl-L-homocysteine + H(+). Its function is as follows. Specifically methylates the N4 position of cytidine in position 1402 (C1402) of 16S rRNA. The sequence is that of Ribosomal RNA small subunit methyltransferase H from Clostridioides difficile (strain 630) (Peptoclostridium difficile).